The following is a 205-amino-acid chain: Recombination protein RecR (205 aa).

A C4-type zinc finger spans residues 60–75 (CKVCHNISDTETCQIC). One can recognise a Toprim domain in the interval 83–178 (SMVCVVENIR…KLSVLARGVS (96 aa)).

It belongs to the RecR family.

Its function is as follows. May play a role in DNA repair. It seems to be involved in an RecBC-independent recombinational process of DNA repair. It may act with RecF and RecO. This is Recombination protein RecR from Bacteroides fragilis (strain ATCC 25285 / DSM 2151 / CCUG 4856 / JCM 11019 / LMG 10263 / NCTC 9343 / Onslow / VPI 2553 / EN-2).